Reading from the N-terminus, the 454-residue chain is Bifunctional protein GlmU (454 aa).

Positions 1 to 226 are pyrophosphorylase; that stretch reads MALNVVILAA…AIEVEGANNR (226 aa). UDP-N-acetyl-alpha-D-glucosamine is bound by residues 8 to 11, Lys-22, Gln-73, 78 to 79, 100 to 102, Gly-137, Glu-151, Asn-166, and Asn-224; these read LAAG, GT, and YGD. Residue Asp-102 participates in Mg(2+) binding. Asn-224 is a binding site for Mg(2+). Residues 227–247 form a linker region; it reads VQLAQLERAYQAREAEKLMIA. The segment at 248-454 is N-acetyltransferase; that stretch reads GANLRDPSRI…GWQRPVKIKE (207 aa). Residues Arg-330 and Lys-348 each contribute to the UDP-N-acetyl-alpha-D-glucosamine site. The active-site Proton acceptor is His-360. Residues Tyr-363 and Asn-374 each coordinate UDP-N-acetyl-alpha-D-glucosamine. Residues Ala-377, 383–384, Ser-402, Ala-420, and Arg-437 contribute to the acetyl-CoA site; that span reads NY.

The protein in the N-terminal section; belongs to the N-acetylglucosamine-1-phosphate uridyltransferase family. In the C-terminal section; belongs to the transferase hexapeptide repeat family. In terms of assembly, homotrimer. Mg(2+) serves as cofactor.

It is found in the cytoplasm. It carries out the reaction alpha-D-glucosamine 1-phosphate + acetyl-CoA = N-acetyl-alpha-D-glucosamine 1-phosphate + CoA + H(+). It catalyses the reaction N-acetyl-alpha-D-glucosamine 1-phosphate + UTP + H(+) = UDP-N-acetyl-alpha-D-glucosamine + diphosphate. It participates in nucleotide-sugar biosynthesis; UDP-N-acetyl-alpha-D-glucosamine biosynthesis; N-acetyl-alpha-D-glucosamine 1-phosphate from alpha-D-glucosamine 6-phosphate (route II): step 2/2. It functions in the pathway nucleotide-sugar biosynthesis; UDP-N-acetyl-alpha-D-glucosamine biosynthesis; UDP-N-acetyl-alpha-D-glucosamine from N-acetyl-alpha-D-glucosamine 1-phosphate: step 1/1. The protein operates within bacterial outer membrane biogenesis; LPS lipid A biosynthesis. Its function is as follows. Catalyzes the last two sequential reactions in the de novo biosynthetic pathway for UDP-N-acetylglucosamine (UDP-GlcNAc). The C-terminal domain catalyzes the transfer of acetyl group from acetyl coenzyme A to glucosamine-1-phosphate (GlcN-1-P) to produce N-acetylglucosamine-1-phosphate (GlcNAc-1-P), which is converted into UDP-GlcNAc by the transfer of uridine 5-monophosphate (from uridine 5-triphosphate), a reaction catalyzed by the N-terminal domain. This Shewanella sp. (strain MR-7) protein is Bifunctional protein GlmU.